The following is an 848-amino-acid chain: Transforming growth factor beta receptor type 3 (848 aa).

Residues 1–20 (MTLHCVVALFALISSCLATA) form the signal peptide. Residues 21–784 (GPEPGVQCAL…IFHGLDTLTV (764 aa)) are Extracellular-facing. N-linked (GlcNAc...) asparagine glycosylation is found at Asn-34 and Asn-141. Cysteines 52 and 197 form a disulfide. A disordered region spans residues 390–448 (SGEGAARHGGLPFPFPYIPRRGRQDGGKDRLPRPKDPVVPSIQLLPGPREPQEAQGSRD). Residues 411–425 (GRQDGGKDRLPRPKD) are compositionally biased toward basic and acidic residues. Residues 454–729 (RCDSEKMLVA…PKCVLPDEAC (276 aa)) enclose the ZP domain. The N-linked (GlcNAc...) asparagine glycan is linked to Asn-491. 3 O-linked (Xyl...) (glycosaminoglycan) serine glycosylation sites follow: Ser-529, Ser-533, and Ser-544. Asn-570, Asn-589, and Asn-696 each carry an N-linked (GlcNAc...) asparagine glycan. Cystine bridges form between Cys-638/Cys-704, Cys-659/Cys-729, and Cys-709/Cys-722. An interaction with TGF-beta ligand region spans residues 736–750 (MIWAMMQNKKTFTKP). A helical transmembrane segment spans residues 785–806 (MGIAFAAFVIGALLTGALWYIY). At 807 to 848 (SHTGDSAGRQPVPTSPPASENSSAAHSLGSTQSTPCSSSSAA) the chain is on the cytoplasmic side. The disordered stretch occupies residues 813 to 848 (AGRQPVPTSPPASENSSAAHSLGSTQSTPCSSSSAA). The span at 833 to 848 (SLGSTQSTPCSSSSAA) shows a compositional bias: low complexity. Thr-837 is modified (phosphothreonine).

In terms of assembly, forms homodimers and homooligomers. Interacts with DYNLT4. Interacts with integrin ITGA5:ITGB1; this interaction promotes the internalization and trafficking of ITGA5:ITGB1 into endocytic vesicles. Interacts with TGFB1, BMP2, BMP5, BMP7 or GDF5 and inhibin A via the ligand binding domains. Interacts with ALK3/BMPR1A; this interaction results in the cell surface retention of BMPR1A. Interacts with ALK6/BMPR1B; this interaction enhances BMPR1B-mediated stimulation of the BMP signaling pathway. Interacts with the scaffolding protein beta-arrestin2/ARRB2; this interaction mediates internalization of TGFBR3 and thus regulates migration, actin cytoskeleton and activation of CDC42. In terms of processing, extensively modified by glycosaminoglycan groups (GAG). Phosphorylated in the cytoplasmic domain by the type II receptor TGFBR2 at THR-837 to mediate recruitment of ARRB2 and subsequent internalization of TGFBR2 and TGFBR3.

The protein resides in the cell membrane. It is found in the secreted. Its subcellular location is the extracellular space. It localises to the extracellular matrix. Its function is as follows. Cell surface receptor that regulates diverse cellular processes including cell proliferation, differentiation, migration, and apoptosis. Initiates BMP, inhibin, and TGF-beta signaling pathways by interacting with different ligands including TGFB1, BMP2, BMP5, BMP7 or GDF5. Alternatively, acts as a cell surface coreceptor for BMP ligands, serving to enhance ligand binding by differentially regulating BMPR1A/ALK3 and BMPR1B/ALK6 receptor trafficking. Promotes epithelial cell adhesion, focal adhesion formation and integrin signaling during epithelial cell spreading on fibronectin. By interacting with the scaffolding protein beta-arrestin2/ARRB2, regulates migration or actin cytoskeleton and promotes the activation of CDC42 as well as the inhibition of NF-kappa-B. In gonadotrope cells, acts as an inhibin A coreceptor and regulates follicle-stimulating hormone (FSH) levels and female fertility. Plays a role in the inhibition of directed and random cell migration in epithelial cells by altering the actin cytoskeletal organization. Participates in epithelial-mesenchymal transformation (EMT) upon binding to BMP2 or TGFB2, by activating the PAR6/SMURF1/RHOA pathway. The polypeptide is Transforming growth factor beta receptor type 3 (TGFBR3) (Sus scrofa (Pig)).